We begin with the raw amino-acid sequence, 171 residues long: 3-hydroxydecanoyl-[acyl-carrier-protein] dehydratase (171 aa).

His70 is a catalytic residue.

It belongs to the thioester dehydratase family. FabA subfamily. Homodimer.

The protein localises to the cytoplasm. The catalysed reaction is a (3R)-hydroxyacyl-[ACP] = a (2E)-enoyl-[ACP] + H2O. It catalyses the reaction (3R)-hydroxydecanoyl-[ACP] = (2E)-decenoyl-[ACP] + H2O. The enzyme catalyses (2E)-decenoyl-[ACP] = (3Z)-decenoyl-[ACP]. Its pathway is lipid metabolism; fatty acid biosynthesis. Its function is as follows. Necessary for the introduction of cis unsaturation into fatty acids. Catalyzes the dehydration of (3R)-3-hydroxydecanoyl-ACP to E-(2)-decenoyl-ACP and then its isomerization to Z-(3)-decenoyl-ACP. Can catalyze the dehydratase reaction for beta-hydroxyacyl-ACPs with saturated chain lengths up to 16:0, being most active on intermediate chain length. This Hydrogenovibrio crunogenus (strain DSM 25203 / XCL-2) (Thiomicrospira crunogena) protein is 3-hydroxydecanoyl-[acyl-carrier-protein] dehydratase.